The following is a 533-amino-acid chain: Glycogen synthase (533 aa).

Lysine 12 contributes to the ADP-alpha-D-glucose binding site. The interval 497–533 (AALARADAASGRRRRAPEQSERLRQERLARQVALASK) is disordered. Residues 512–525 (APEQSERLRQERLA) show a composition bias toward basic and acidic residues.

It belongs to the glycosyltransferase 1 family. Bacterial/plant glycogen synthase subfamily.

The catalysed reaction is [(1-&gt;4)-alpha-D-glucosyl](n) + ADP-alpha-D-glucose = [(1-&gt;4)-alpha-D-glucosyl](n+1) + ADP + H(+). It functions in the pathway glycan biosynthesis; glycogen biosynthesis. In terms of biological role, synthesizes alpha-1,4-glucan chains using ADP-glucose. The sequence is that of Glycogen synthase from Burkholderia thailandensis (strain ATCC 700388 / DSM 13276 / CCUG 48851 / CIP 106301 / E264).